An 878-amino-acid chain; its full sequence is Glycogen [starch] synthase (878 aa).

Residue Lys61 coordinates UDP-alpha-D-glucose. 2 disordered regions span residues 637–721 (PPKP…NVIP) and 746–878 (NEFK…KSLK). Composition is skewed to low complexity over residues 641–656 (ISRS…LKLS) and 666–676 (QQQQQQQQPQP). Residues 677–692 (IGTTINLIPPSSNVSV) show a composition bias toward polar residues. 4 stretches are compositionally biased toward low complexity: residues 693 to 715 (TPTT…ITTP), 746 to 781 (NEFK…AAAT), 795 to 830 (PNTS…NGKP), and 838 to 878 (TKSN…KSLK).

The protein belongs to the glycosyltransferase 3 family.

The enzyme catalyses [(1-&gt;4)-alpha-D-glucosyl](n) + UDP-alpha-D-glucose = [(1-&gt;4)-alpha-D-glucosyl](n+1) + UDP + H(+). Its pathway is glycan biosynthesis; glycogen biosynthesis. Functionally, catalyzes the formation of apha-1,4 glycosidic bonds adding glucose residue from UDPG to the growing chain of glycogen. The sequence is that of Glycogen [starch] synthase (glcS) from Dictyostelium discoideum (Social amoeba).